The primary structure comprises 395 residues: Chalcone synthase (395 aa).

Val-2 is subject to N-acetylvaline. Cys-169 is an active-site residue.

It belongs to the thiolase-like superfamily. Chalcone/stilbene synthases family.

The catalysed reaction is (E)-4-coumaroyl-CoA + 3 malonyl-CoA + 3 H(+) = 2',4,4',6'-tetrahydroxychalcone + 3 CO2 + 4 CoA. It functions in the pathway secondary metabolite biosynthesis; flavonoid biosynthesis. Its function is as follows. The primary product of this enzyme is 4,2',4',6'-tetrahydroxychalcone (also termed naringenin-chalcone or chalcone) which can under specific conditions spontaneously isomerize into naringenin. The chain is Chalcone synthase (CHS) from Cardamine amara (Large bitter-cress).